Consider the following 106-residue polypeptide: uncharacterized protein (106 aa).

Residues Met1–Arg23 are disordered. Over residues Ser14–Arg23 the composition is skewed to basic residues.

This is an uncharacterized protein from Treponema pallidum (strain Nichols).